A 90-amino-acid polypeptide reads, in one-letter code: uncharacterized protein (90 aa).

This is an uncharacterized protein from Bacillus subtilis (strain 168).